The chain runs to 396 residues: F-box protein pof13 (396 aa).

The region spanning 40–89 (KNSNLFLLNRDIWSLIINYLDAFDILRLMHSSRQFYYWLRKSAVDECCFN) is the F-box domain.

Part of a SCF (SKP1-cullin-F-box) protein ligase complex. Interacts with skp1.

The protein resides in the cytoplasm. It functions in the pathway protein modification; protein ubiquitination. The sequence is that of F-box protein pof13 (pof13) from Schizosaccharomyces pombe (strain 972 / ATCC 24843) (Fission yeast).